The chain runs to 1060 residues: MASALNSKINPPGTCQGSKADGGAGWRMDCDPQMHVKMCKKIAQLTKVIYALNTRQDEAEASMEALREAHQEELQNAVAETKARLLQEQGCAEEEALLQRIQALESALELQKRLTEEALAESASCRLETKERELRVEAEHAERVLTLSREMLELKADYERRLQHLTSHEATPQGRLPQESPETKSEPGQGPEMQEVLLEVQRLRVENQQLSKDYARKAEELQATYERENEAIRQAMQQSVSQALWQWQEKESDLRKNFQVQESALQAQVRKLEGDLEHRGRKISDLKKYAQKLKERIQDLDVQLKEARQENSELKGTAKKLGEKLAVAKDRMMLQECRGTQQTDAMKTELVSENKVLREENDLEAGNLHPQQDQSCLKECPCMKGGTDMQTKKEASAETEYMKQQYEEDLRKIKHQTEEEKKHLKDQLVKRLEDLVKKHTVEIKSVRSSVEAERKKLQREVEAQLEEVRKKSEKEIKQLEEEKAALNVKLQNSLLEVLRLEEFIQQNKTRPTGAEESPQELGRQHCSILETQDPCLKLDETSPRGEEYQDKLAAEEGTSSDEEERTKVLLKEGSDPQPPLGSLLKEKTSKIQRLEEDWQSQKAKLQAQVSQMQQALEQCTSNYREDLQALKQLSDLEREKLQRELQETTQQNHAMKAQLEASHQRALRMLEKARHQELKATEERLKKESSHSLQIQHQTHRLELQALEEKARQELQEERERMQAQQALLLESLRQELSEQQAACSGHQKDLEALQAELRALGRQQASSQCPGDSKDHIIATEERGGPGQAGSPPGAAGQGSGEGCGLWEENAQLQDAVRRLRAEVEQHQQEAQKLRDQRRFLEETQQAQRAREVETLRQEHRKEMQAMVADFSSAQAQLQARLAALEAELKDSGEKPGKGASRPEDLQLIGRLQTRLKEREDIIKQLTEERRFHYAAFPSAMSHRNRSFSFNPHPGYLTPSMKKKKVEDVPSRVVSVPNLASYAKNFLSGDLSSRINAPPITTSPSLDPSPSCGRTYKPNQSTDAKTATRTPDGETAQAKEVQQKQGSPHQEWFTKYFSF.

The span at 1-17 shows a compositional bias: polar residues; it reads MASALNSKINPPGTCQG. A disordered region spans residues 1–24; the sequence is MASALNSKINPPGTCQGSKADGGA. Residues 51 to 159 are a coiled coil; that stretch reads ALNTRQDEAE…EMLELKADYE (109 aa). A disordered region spans residues 165 to 191; it reads LTSHEATPQGRLPQESPETKSEPGQGP. 2 coiled-coil regions span residues 192 to 333 and 402 to 502; these read EMQE…DRMM and MKQQ…RLEE. 3 disordered regions span residues 532-566, 681-700, and 762-803; these read QDPC…EERT, TEER…HQTH, and GRQQ…GSGE. Composition is skewed to basic and acidic residues over residues 536 to 554, 681 to 690, and 773 to 785; these read LKLD…KLAA, TEERLKKESS, and DSKD…EERG. A coiled-coil region spans residues 584–769; it reads LKEKTSKIQR…ALGRQQASSQ (186 aa). Residues 806–934 are a coiled coil; sequence GLWEENAQLQ…KQLTEERRFH (129 aa). Composition is skewed to polar residues over residues 994–1009 and 1018–1030; these read SRIN…SLDP and KPNQ…TATR. The tract at residues 994–1050 is disordered; it reads SRINAPPITTSPSLDPSPSCGRTYKPNQSTDAKTATRTPDGETAQAKEVQQKQGSPH.

It belongs to the FAM184 family.

The chain is Protein FAM184B (FAM184B) from Homo sapiens (Human).